A 224-amino-acid chain; its full sequence is UPF0758 protein PSHAa2643 (224 aa).

In terms of domain architecture, MPN spans 102–224; it reads IFNSPNAVYD…CVSFAERGLI (123 aa). The Zn(2+) site is built by histidine 173, histidine 175, and aspartate 186. The short motif at 173-186 is the JAMM motif element; sequence HNHPSGIAEPSQAD.

It belongs to the UPF0758 family.

The polypeptide is UPF0758 protein PSHAa2643 (Pseudoalteromonas translucida (strain TAC 125)).